The primary structure comprises 343 residues: Cytoplasmic tRNA 2-thiolation protein 1 (343 aa).

This sequence belongs to the TtcA family. CTU1/NCS6/ATPBD3 subfamily.

It localises to the cytoplasm. It participates in tRNA modification; 5-methoxycarbonylmethyl-2-thiouridine-tRNA biosynthesis. Plays a central role in 2-thiolation of mcm(5)S(2)U at tRNA wobble positions of tRNA(Lys), tRNA(Glu) and tRNA(Gln). Directly binds tRNAs and probably acts by catalyzing adenylation of tRNAs, an intermediate required for 2-thiolation. It is unclear whether it acts as a sulfurtransferase that transfers sulfur from thiocarboxylated URM1 onto the uridine of tRNAs at wobble position. The chain is Cytoplasmic tRNA 2-thiolation protein 1 from Drosophila sechellia (Fruit fly).